The following is a 548-amino-acid chain: Glucan endo-1,3-beta-glucosidase (548 aa).

Residues 1-36 constitute a signal peptide (tat-type signal); the sequence is MPHDRKNSSRRAWAALCAAVLAVSGALVGVAAPASA. Residues 38 to 396 enclose the GH64 domain; it reads PATIPLTITN…PQAAYIKLDP (359 aa). The active-site Proton donor is glutamate 153. The active-site Proton acceptor is aspartate 169. One can recognise a Ricin B-type lectin domain in the interval 422 to 548; sequence GTGALRIGST…NQTEAQRWTL (127 aa).

The protein belongs to the glycosyl hydrolase 64 family. Predicted to be exported by the Tat system. The position of the signal peptide cleavage has not been experimentally proven.

Its subcellular location is the periplasm. It carries out the reaction Hydrolysis of (1-&gt;3)-beta-D-glucosidic linkages in (1-&gt;3)-beta-D-glucans.. Functionally, lysis of cellular walls containing beta-1,3-glucans. Implicated in the defense against fungal pathogens. The protein is Glucan endo-1,3-beta-glucosidase (glcI) of Arthrobacter sp. (strain YCWD3).